Reading from the N-terminus, the 237-residue chain is Phosphoribosylaminoimidazole-succinocarboxamide synthase (237 aa).

Belongs to the SAICAR synthetase family.

The catalysed reaction is 5-amino-1-(5-phospho-D-ribosyl)imidazole-4-carboxylate + L-aspartate + ATP = (2S)-2-[5-amino-1-(5-phospho-beta-D-ribosyl)imidazole-4-carboxamido]succinate + ADP + phosphate + 2 H(+). It participates in purine metabolism; IMP biosynthesis via de novo pathway; 5-amino-1-(5-phospho-D-ribosyl)imidazole-4-carboxamide from 5-amino-1-(5-phospho-D-ribosyl)imidazole-4-carboxylate: step 1/2. The sequence is that of Phosphoribosylaminoimidazole-succinocarboxamide synthase from Proteus mirabilis (strain HI4320).